Here is a 303-residue protein sequence, read N- to C-terminus: Quinolinate synthase (303 aa).

Iminosuccinate contacts are provided by histidine 23 and serine 40. Cysteine 85 contributes to the [4Fe-4S] cluster binding site. Iminosuccinate is bound by residues 111–113 (YVN) and serine 128. Cysteine 171 contacts [4Fe-4S] cluster. Residues 197-199 (HPE) and threonine 214 contribute to the iminosuccinate site. Cysteine 259 serves as a coordination point for [4Fe-4S] cluster.

Belongs to the quinolinate synthase family. Type 2 subfamily. It depends on [4Fe-4S] cluster as a cofactor.

It is found in the cytoplasm. It catalyses the reaction iminosuccinate + dihydroxyacetone phosphate = quinolinate + phosphate + 2 H2O + H(+). The protein operates within cofactor biosynthesis; NAD(+) biosynthesis; quinolinate from iminoaspartate: step 1/1. Functionally, catalyzes the condensation of iminoaspartate with dihydroxyacetone phosphate to form quinolinate. The polypeptide is Quinolinate synthase (Thermodesulfovibrio yellowstonii (strain ATCC 51303 / DSM 11347 / YP87)).